The primary structure comprises 549 residues: uncharacterized protein (549 aa).

The signal sequence occupies residues M1–A19.

This is an uncharacterized protein from Escherichia coli (strain K12).